The sequence spans 77 residues: Adipokinetic prohormone type 3 (77 aa).

A signal peptide spans 1–22 (MQVRAVLVLAVVALVAVATSRA). At Gln23 the chain carries Pyrrolidone carboxylic acid. Trp30 bears the Tryptophan amide mark.

This sequence belongs to the AKH/HRTH/RPCH family.

Its subcellular location is the secreted. This hormone, released from cells in the corpora cardiaca, causes release of diglycerides from the fat body and stimulation of muscles to use these diglycerides as an energy source during energy-demanding processes. The protein is Adipokinetic prohormone type 3 of Locusta migratoria (Migratory locust).